The following is a 495-amino-acid chain: Glutamyl-tRNA(Gln) amidotransferase subunit A (495 aa).

Catalysis depends on charge relay system residues lysine 78 and serine 159. Catalysis depends on serine 183, which acts as the Acyl-ester intermediate.

Belongs to the amidase family. GatA subfamily. As to quaternary structure, heterotrimer of A, B and C subunits.

It catalyses the reaction L-glutamyl-tRNA(Gln) + L-glutamine + ATP + H2O = L-glutaminyl-tRNA(Gln) + L-glutamate + ADP + phosphate + H(+). Its function is as follows. Allows the formation of correctly charged Gln-tRNA(Gln) through the transamidation of misacylated Glu-tRNA(Gln) in organisms which lack glutaminyl-tRNA synthetase. The reaction takes place in the presence of glutamine and ATP through an activated gamma-phospho-Glu-tRNA(Gln). This chain is Glutamyl-tRNA(Gln) amidotransferase subunit A, found in Rhizorhabdus wittichii (strain DSM 6014 / CCUG 31198 / JCM 15750 / NBRC 105917 / EY 4224 / RW1) (Sphingomonas wittichii).